The sequence spans 393 residues: tRNA(Met) cytidine acetate ligase (393 aa).

Positions 81, 142, and 167 each coordinate ATP.

It belongs to the TmcAL family.

Its subcellular location is the cytoplasm. It carries out the reaction cytidine(34) in elongator tRNA(Met) + acetate + ATP = N(4)-acetylcytidine(34) in elongator tRNA(Met) + AMP + diphosphate. Functionally, catalyzes the formation of N(4)-acetylcytidine (ac(4)C) at the wobble position of elongator tRNA(Met), using acetate and ATP as substrates. First activates an acetate ion to form acetyladenylate (Ac-AMP) and then transfers the acetyl group to tRNA to form ac(4)C34. In Bacillus thuringiensis (strain Al Hakam), this protein is tRNA(Met) cytidine acetate ligase.